Here is a 201-residue protein sequence, read N- to C-terminus: Myelomonocytic growth factor (201 aa).

An N-terminal signal peptide occupies residues 1 to 23; sequence MCCLTPVLALALVLGAPWQALHG. 2 disulfides stabilise this stretch: Cys61/Cys67 and Cys89/Cys99. N-linked (GlcNAc...) asparagine glycans are attached at residues Asn123 and Asn137.

The protein belongs to the IL-6 superfamily.

It is found in the secreted. In terms of biological role, hematopoietic growth factor that stimulates the proliferation and colony formation of normal and transformed avian cells of the myeloid lineage. In Gallus gallus (Chicken), this protein is Myelomonocytic growth factor.